The following is a 99-amino-acid chain: Small ribosomal subunit protein uS14 (99 aa).

Belongs to the universal ribosomal protein uS14 family. Part of the 30S ribosomal subunit. Contacts proteins S3 and S10.

In terms of biological role, binds 16S rRNA, required for the assembly of 30S particles and may also be responsible for determining the conformation of the 16S rRNA at the A site. The polypeptide is Small ribosomal subunit protein uS14 (Bacteroides fragilis (strain ATCC 25285 / DSM 2151 / CCUG 4856 / JCM 11019 / LMG 10263 / NCTC 9343 / Onslow / VPI 2553 / EN-2)).